A 337-amino-acid polypeptide reads, in one-letter code: RNA 3'-terminal phosphate cyclase (337 aa).

ATP is bound by residues Gln-101 and 282–285; that span reads HMSD. The Tele-AMP-histidine intermediate role is filled by His-306.

This sequence belongs to the RNA 3'-terminal cyclase family. Type 1 subfamily.

The protein localises to the cytoplasm. The enzyme catalyses a 3'-end 3'-phospho-ribonucleotide-RNA + ATP = a 3'-end 2',3'-cyclophospho-ribonucleotide-RNA + AMP + diphosphate. Catalyzes the conversion of 3'-phosphate to a 2',3'-cyclic phosphodiester at the end of RNA. The mechanism of action of the enzyme occurs in 3 steps: (A) adenylation of the enzyme by ATP; (B) transfer of adenylate to an RNA-N3'P to produce RNA-N3'PP5'A; (C) and attack of the adjacent 2'-hydroxyl on the 3'-phosphorus in the diester linkage to produce the cyclic end product. The biological role of this enzyme is unknown but it is likely to function in some aspects of cellular RNA processing. This is RNA 3'-terminal phosphate cyclase (rtcA) from Saccharolobus solfataricus (strain ATCC 35092 / DSM 1617 / JCM 11322 / P2) (Sulfolobus solfataricus).